The sequence spans 316 residues: Biotin synthase (316 aa).

Residues 36–264 (FDNRITLCAI…TATLRICGGR (229 aa)) form the Radical SAM core domain. [4Fe-4S] cluster is bound by residues Cys-53, Cys-57, and Cys-60. [2Fe-2S] cluster-binding residues include Cys-129, Cys-189, and Arg-259.

Belongs to the radical SAM superfamily. Biotin synthase family. Homodimer. It depends on [4Fe-4S] cluster as a cofactor. [2Fe-2S] cluster serves as cofactor.

It carries out the reaction (4R,5S)-dethiobiotin + (sulfur carrier)-SH + 2 reduced [2Fe-2S]-[ferredoxin] + 2 S-adenosyl-L-methionine = (sulfur carrier)-H + biotin + 2 5'-deoxyadenosine + 2 L-methionine + 2 oxidized [2Fe-2S]-[ferredoxin]. Its pathway is cofactor biosynthesis; biotin biosynthesis; biotin from 7,8-diaminononanoate: step 2/2. In terms of biological role, catalyzes the conversion of dethiobiotin (DTB) to biotin by the insertion of a sulfur atom into dethiobiotin via a radical-based mechanism. The polypeptide is Biotin synthase (Desulfovibrio desulfuricans (strain ATCC 27774 / DSM 6949 / MB)).